Reading from the N-terminus, the 306-residue chain is Pantothenate kinase (306 aa).

91–98 is a binding site for ATP; sequence GSVAVGKS.

This sequence belongs to the prokaryotic pantothenate kinase family.

Its subcellular location is the cytoplasm. It carries out the reaction (R)-pantothenate + ATP = (R)-4'-phosphopantothenate + ADP + H(+). Its pathway is cofactor biosynthesis; coenzyme A biosynthesis; CoA from (R)-pantothenate: step 1/5. In Streptococcus pneumoniae serotype 19F (strain G54), this protein is Pantothenate kinase.